A 341-amino-acid chain; its full sequence is Adenine deaminase (341 aa).

Histidine 24, histidine 26, and histidine 204 together coordinate Zn(2+). Glutamate 207 acts as the Proton donor in catalysis. Aspartate 285 is a Zn(2+) binding site. Position 286 (aspartate 286) interacts with substrate.

Belongs to the metallo-dependent hydrolases superfamily. Adenosine and AMP deaminases family. Adenine deaminase type 2 subfamily. Requires Zn(2+) as cofactor.

It carries out the reaction adenine + H2O + H(+) = hypoxanthine + NH4(+). Its function is as follows. Catalyzes the hydrolytic deamination of adenine to hypoxanthine. Plays an important role in the purine salvage pathway and in nitrogen catabolism. The polypeptide is Adenine deaminase (Sphingopyxis alaskensis (strain DSM 13593 / LMG 18877 / RB2256) (Sphingomonas alaskensis)).